The chain runs to 101 residues: Apolipoprotein C-II (101 aa).

A signal peptide spans methionine 1–alanine 22. The tract at residues alanine 66 to methionine 74 is lipid binding. The lipoprotein lipase cofactor stretch occupies residues serine 78 to glutamine 101.

Belongs to the apolipoprotein C2 family. Post-translationally, proapolipoprotein C-II is synthesized as a sialic acid containing glycoprotein which is subsequently desialylated prior to its proteolytic processing. In terms of processing, proapolipoprotein C-II, the major form found in plasma undergoes proteolytic cleavage of its N-terminal hexapeptide to generate apolipoprotein C-II, which occurs as the minor form in plasma.

It localises to the secreted. Component of chylomicrons, very low-density lipoproteins (VLDL), low-density lipoproteins (LDL), and high-density lipoproteins (HDL) in plasma. Plays an important role in lipoprotein metabolism as an activator of lipoprotein lipase. Both proapolipoprotein C-II and apolipoprotein C-II can activate lipoprotein lipase. In Tupaia glis (Common tree shrew), this protein is Apolipoprotein C-II (APOC2).